Here is a 428-residue protein sequence, read N- to C-terminus: MMKRFTKQENSWVLYDWANSAYSIVVTTAVFPLFYKSAAAESGVSAAQSTAYLGYTIAISTFILAMLGPILGTIADYEGCKKKFFGFFVSAGVASTAMLAFIPSEHWLLLLLFYTVSAIGFSGANVFYDAFLVDVTPEKRMNLVSARGFGLGYIGSTIPFIISIAVILLAQAETIPVSVSAASQLSFFITAAWWGLFTIPMIKHVHQRYYIKKEPHIVINSFKRLGQTMKRIRQYRALFLFLLAYFFYIDGVGTIITMSTSYGSDLGIGSSSLLIILFVTQVVAAPFSIIYGKLAERFTGKTMLYVGIVIYMIVCVYAYFMETTLDFWILAMLVATSQGGIQALSRSYFAKLVPKRHANEFFGFYNIFGKFASIMGPLLIAVTAQLTGKSSTAVFSLIILFVIGIVILAFVPEETSTDVSQQQNDLPL.

12 consecutive transmembrane segments (helical) span residues 14-34 (LYDW…FPLF), 55-75 (YTIA…GTIA), 84-104 (FFGF…FIPS), 107-127 (WLLL…ANVF), 149-169 (FGLG…VILL), 182-202 (ASQL…IPMI), 238-258 (LFLF…IITM), 272-292 (SLLI…IIYG), 302-322 (TMLY…YFME), 324-344 (TLDF…IQAL), 361-381 (FFGF…LLIA), and 392-412 (TAVF…AFVP).

This sequence belongs to the major facilitator superfamily.

It localises to the cell membrane. This is an uncharacterized protein from Bacillus subtilis (strain 168).